The following is a 117-amino-acid chain: Holo-[acyl-carrier-protein] synthase (117 aa).

Asp8 and Glu58 together coordinate Mg(2+).

It belongs to the P-Pant transferase superfamily. AcpS family. Requires Mg(2+) as cofactor.

The protein localises to the cytoplasm. The enzyme catalyses apo-[ACP] + CoA = holo-[ACP] + adenosine 3',5'-bisphosphate + H(+). In terms of biological role, transfers the 4'-phosphopantetheine moiety from coenzyme A to a Ser of acyl-carrier-protein. This Latilactobacillus sakei subsp. sakei (strain 23K) (Lactobacillus sakei subsp. sakei) protein is Holo-[acyl-carrier-protein] synthase.